The primary structure comprises 214 residues: Probable nicotinate-nucleotide adenylyltransferase (214 aa).

It belongs to the NadD family.

The catalysed reaction is nicotinate beta-D-ribonucleotide + ATP + H(+) = deamido-NAD(+) + diphosphate. Its pathway is cofactor biosynthesis; NAD(+) biosynthesis; deamido-NAD(+) from nicotinate D-ribonucleotide: step 1/1. In terms of biological role, catalyzes the reversible adenylation of nicotinate mononucleotide (NaMN) to nicotinic acid adenine dinucleotide (NaAD). The polypeptide is Probable nicotinate-nucleotide adenylyltransferase (Pelodictyon phaeoclathratiforme (strain DSM 5477 / BU-1)).